A 472-amino-acid chain; its full sequence is Bifunctional protein HldE (472 aa).

The ribokinase stretch occupies residues 1-315; that stretch reads MAKRVKILVV…QLLNSSFGAN (315 aa). 192 to 195 serves as a coordination point for ATP; sequence NKKE. Aspartate 260 is a catalytic residue. A cytidylyltransferase region spans residues 340–472; that stretch reads FTNGCFDILH…IKDAKNDDKK (133 aa).

In the N-terminal section; belongs to the carbohydrate kinase PfkB family. The protein in the C-terminal section; belongs to the cytidylyltransferase family. In terms of assembly, homodimer.

The enzyme catalyses D-glycero-beta-D-manno-heptose 7-phosphate + ATP = D-glycero-beta-D-manno-heptose 1,7-bisphosphate + ADP + H(+). It carries out the reaction D-glycero-beta-D-manno-heptose 1-phosphate + ATP + H(+) = ADP-D-glycero-beta-D-manno-heptose + diphosphate. It participates in nucleotide-sugar biosynthesis; ADP-L-glycero-beta-D-manno-heptose biosynthesis; ADP-L-glycero-beta-D-manno-heptose from D-glycero-beta-D-manno-heptose 7-phosphate: step 1/4. It functions in the pathway nucleotide-sugar biosynthesis; ADP-L-glycero-beta-D-manno-heptose biosynthesis; ADP-L-glycero-beta-D-manno-heptose from D-glycero-beta-D-manno-heptose 7-phosphate: step 3/4. Functionally, catalyzes the phosphorylation of D-glycero-D-manno-heptose 7-phosphate at the C-1 position to selectively form D-glycero-beta-D-manno-heptose-1,7-bisphosphate. Its function is as follows. Catalyzes the ADP transfer from ATP to D-glycero-beta-D-manno-heptose 1-phosphate, yielding ADP-D-glycero-beta-D-manno-heptose. This chain is Bifunctional protein HldE, found in Campylobacter concisus (strain 13826).